The chain runs to 492 residues: PTS system N-acetylmuramic acid-specific EIIBC component (492 aa).

Residues 1-89 (MAKINQSVIA…NELLNSSTPT (89 aa)) form the PTS EIIB type-1 domain. The Phosphocysteine intermediate; for EIIB activity role is filled by C28. The 365-residue stretch at 123-487 (TKFATIFTPL…KKIEVLKADV (365 aa)) folds into the PTS EIIC type-1 domain. A run of 10 helical transmembrane segments spans residues 125-145 (FATIFTPLIPGFIAVGLLLGF), 167-187 (IIGYMKVFSKGMFSFLSILIG), 193-213 (AFGGSGINGAIIASLFVLSYN), 227-247 (FFGYSIDPRGNIIGVLIAAIL), 265-285 (MILTSAITLLIMGAIAFIFIM), 311-331 (ILAGLFLLAVMFGVHQGFVPV), 344-364 (LFPILAMAGGGQVGAALALYV), 378-398 (GAIIPGLLGIGEPLIYGVTLP), 403-423 (FITACLGGAAGGFFIGLIAYL), and 450-470 (IFVGMAVYAAGLVVAYISGFV).

It is found in the cell inner membrane. It carries out the reaction N-acetyl-beta-D-muramate(out) + N(pros)-phospho-L-histidyl-[protein] = N-acetyl-beta-D-muramate 6-phosphate(in) + L-histidyl-[protein]. Functionally, the phosphoenolpyruvate-dependent sugar phosphotransferase system (sugar PTS), a major carbohydrate active transport system, catalyzes the phosphorylation of incoming sugar substrates concomitantly with their translocation across the cell membrane. This system is involved in N-acetylmuramic acid (MurNAc) transport, yielding cytoplasmic MurNAc-6-P. Is also able to take up anhydro-N-acetylmuramic acid (anhMurNAc), but cannot phosphorylate the carbon 6, probably because of the 1,6-anhydro ring. This chain is PTS system N-acetylmuramic acid-specific EIIBC component (murP), found in Photorhabdus laumondii subsp. laumondii (strain DSM 15139 / CIP 105565 / TT01) (Photorhabdus luminescens subsp. laumondii).